The primary structure comprises 255 residues: GTP cyclohydrolase FolE2 (255 aa).

It belongs to the GTP cyclohydrolase IV family.

It carries out the reaction GTP + H2O = 7,8-dihydroneopterin 3'-triphosphate + formate + H(+). It participates in cofactor biosynthesis; 7,8-dihydroneopterin triphosphate biosynthesis; 7,8-dihydroneopterin triphosphate from GTP: step 1/1. Its function is as follows. Converts GTP to 7,8-dihydroneopterin triphosphate. The polypeptide is GTP cyclohydrolase FolE2 (Syntrophus aciditrophicus (strain SB)).